The sequence spans 732 residues: Exonuclease 1 (732 aa).

An N-domain region spans residues 1-99 (MGITGLIPFV…KRRRDSRKQS (99 aa)). Mg(2+) is bound by residues Asp30, Asp78, Glu150, Asp152, Asp171, Asp173, and Asp226. The interval 138–230 (RSRNVDCIVA…ILSGCDYLDS (93 aa)) is I-domain. 3 disordered regions span residues 422-471 (YSFK…QRSP), 524-625 (DEQT…TNST), and 661-716 (SCSS…VSQN). Ser431 and Ser433 each carry phosphoserine. Over residues 432-442 (PSREDSVDQER) the composition is skewed to basic and acidic residues. Residue Thr443 is modified to Phosphothreonine. Ser447 carries the post-translational modification Phosphoserine. Basic and acidic residues-rich tracts occupy residues 457–467 (FAKERTGEEAN) and 525–537 (EQTR…LRDT). Polar residues-rich tracts occupy residues 572 to 593 (RCSS…SLLE) and 608 to 625 (DLNN…TNST). Over residues 661–677 (SCSSDQRASSTSSSSQQ) the composition is skewed to low complexity. Over residues 703 to 716 (KSRTNGKLGAVSQN) the composition is skewed to polar residues.

This sequence belongs to the XPG/RAD2 endonuclease family. EXO1 subfamily. The cofactor is Mg(2+). As to expression, specifically expressed in the female germline.

The protein resides in the nucleus. In terms of biological role, 5'-&gt;3' double-stranded DNA exonuclease which may also contain a cryptic 3'-&gt;5' double-stranded DNA exonuclease activity. Also exhibits endonuclease activity against 5'-overhanging flap structures similar to those generated by displacement synthesis when DNA polymerase encounters the 5'-end of a downstream Okazaki fragment. Required for DNA mismatch repair (MMR). In Drosophila melanogaster (Fruit fly), this protein is Exonuclease 1 (tos).